Consider the following 500-residue polypeptide: ERAD-associated E3 ubiquitin-protein ligase HRD1 (500 aa).

The Cytoplasmic portion of the chain corresponds to 1–3 (MIR). Residues 4–24 (LQTYAAFSLMATATAVYYAFS) form a helical membrane-spanning segment. Over 25 to 40 (SREQFYPAMVYLSTSK) the chain is Lumenal. Residues 41–61 (ICFVLLLNTGLVAMCVAWQLV) form a helical membrane-spanning segment. Topologically, residues 62 to 98 (KRLFLGTLREAEVERLNEQAWREVVEILFAVTIFRQD) are cytoplasmic. A helical transmembrane segment spans residues 99 to 119 (FSVSFLAMVAALLLVKALHWL). Residues 120 to 135 (AQKRVEYIETTPSVPM) lie on the Lumenal side of the membrane. A helical transmembrane segment spans residues 136 to 156 (LSHARIVSFMLFLLVVDCLFL). At 157-170 (SNSLRSLIHKREAS) the chain is on the cytoplasmic side. The chain crosses the membrane as a helical span at residues 171–191 (VAIFFSFEYMILATSTVSTFV). The Lumenal segment spans residues 192–225 (KYIFYVSDMLMEGQWEKKAVYTFYLELISDLVHL). The chain crosses the membrane as a helical span at residues 226 to 246 (SLYMLFFIAIFLNYGVPLHLI). Residues 247-500 (RELYETFRNF…NENGEHTKSD (254 aa)) lie on the Cytoplasmic side of the membrane. An RING-type; atypical zinc finger spans residues 292-330 (CIICREEMTTAKKLLCGHLFHVHCLRSWLERQHTCPTCR). 2 disordered regions span residues 337 to 375 (DNGRTAARPHGVHPGVQPVPGNGTPGSERAAGENISRRQ) and 398 to 438 (NNLN…SAPT). Positions 348-358 (VHPGVQPVPGN) are enriched in low complexity. The segment covering 398–426 (NNLNRYSTPPQSTSNGPQSGEASTSNQSP) has biased composition (polar residues).

Belongs to the HRD1 family.

It localises to the endoplasmic reticulum membrane. The catalysed reaction is S-ubiquitinyl-[E2 ubiquitin-conjugating enzyme]-L-cysteine + [acceptor protein]-L-lysine = [E2 ubiquitin-conjugating enzyme]-L-cysteine + N(6)-ubiquitinyl-[acceptor protein]-L-lysine.. It participates in protein modification; protein ubiquitination. In terms of biological role, probable component of the HRD1 ubiquitin ligase complex that mediates the rapid degradation of misfolded endoplasmic reticulum (ER) proteins, a process called ER-associated degradation (ERAD). The chain is ERAD-associated E3 ubiquitin-protein ligase HRD1 from Oryza sativa subsp. japonica (Rice).